Reading from the N-terminus, the 322-residue chain is Zinc finger C2HC domain-containing protein CBG14627 (322 aa).

2 consecutive C2HC/C3H-type zinc fingers follow at residues 9–38 and 119–148; these read PVYP…LATL and DYVQ…QTTR. Residues cysteine 13, cysteine 16, histidine 28, cysteine 32, cysteine 123, cysteine 126, histidine 138, and cysteine 142 each coordinate Zn(2+). The interval 144–322 is disordered; it reads EQTTRKQGGK…SRNNSRSRIF (179 aa). Residues 148 to 168 are compositionally biased toward polar residues; that stretch reads RKQGGKSSAGNRGLTSNNYRS. Residues 171-219 are compositionally biased toward basic and acidic residues; that stretch reads SKHEGRKQESSSRNGSAERKTTTRGRDGSLSRARRDDSNDLTNRRKSLE. Positions 220-238 are enriched in polar residues; sequence TRSQLTTGQANNRTTSLSA. The segment covering 278–294 has biased composition (low complexity); that stretch reads TTTTASASRSGSGSSSR. Positions 296 to 305 are enriched in basic and acidic residues; that stretch reads RTRDESRESR. Residues 311–322 show a composition bias toward low complexity; that stretch reads SNSRNNSRSRIF.

It belongs to the ZC2HC1 family. Zn(2+) is required as a cofactor.

The sequence is that of Zinc finger C2HC domain-containing protein CBG14627 from Caenorhabditis briggsae.